The following is a 350-amino-acid chain: Zinc finger protein 367 (350 aa).

The interval Ser104–Asp151 is disordered. A compositionally biased stretch (basic and acidic residues) spans Gly137 to Asp151. C2H2-type zinc fingers lie at residues Ile167 to His189 and Tyr195 to His219. Positions Lys290–Gln327 are disordered. Residues Leu308–Asn342 are a coiled coil. The residue at position 310 (Ser310) is a Phosphoserine. Basic and acidic residues predominate over residues Glu316–Gln327.

This sequence belongs to the krueppel C2H2-type zinc-finger protein family.

It localises to the nucleus. In terms of biological role, transcriptional activator. Isoform 1 may be involved in transcriptional activation of erythroid genes. This Homo sapiens (Human) protein is Zinc finger protein 367 (ZNF367).